A 173-amino-acid chain; its full sequence is Crossover junction endodeoxyribonuclease RuvC (173 aa).

Active-site residues include D8, E67, and D139. Mg(2+) contacts are provided by D8, E67, and D139.

This sequence belongs to the RuvC family. As to quaternary structure, homodimer which binds Holliday junction (HJ) DNA. The HJ becomes 2-fold symmetrical on binding to RuvC with unstacked arms; it has a different conformation from HJ DNA in complex with RuvA. In the full resolvosome a probable DNA-RuvA(4)-RuvB(12)-RuvC(2) complex forms which resolves the HJ. The cofactor is Mg(2+).

Its subcellular location is the cytoplasm. It catalyses the reaction Endonucleolytic cleavage at a junction such as a reciprocal single-stranded crossover between two homologous DNA duplexes (Holliday junction).. Functionally, the RuvA-RuvB-RuvC complex processes Holliday junction (HJ) DNA during genetic recombination and DNA repair. Endonuclease that resolves HJ intermediates. Cleaves cruciform DNA by making single-stranded nicks across the HJ at symmetrical positions within the homologous arms, yielding a 5'-phosphate and a 3'-hydroxyl group; requires a central core of homology in the junction. The consensus cleavage sequence is 5'-(A/T)TT(C/G)-3'. Cleavage occurs on the 3'-side of the TT dinucleotide at the point of strand exchange. HJ branch migration catalyzed by RuvA-RuvB allows RuvC to scan DNA until it finds its consensus sequence, where it cleaves and resolves the cruciform DNA. The sequence is that of Crossover junction endodeoxyribonuclease RuvC from Aeromonas salmonicida (strain A449).